The primary structure comprises 182 residues: MGNEKQILSADEIRRALVRIAHEIDERNGGLRDVVLVGIRSRGVPLAERIAAAIADFEGTRIPVGQLDITLYRDDLKLRGPAPRVRKTDLPIDITGKTVVLVDDVLFTGRTVRAALDAIADLGRPARIQLAVLIDRGHRELPIRADFVGKNVPTSLSERVMVRLRETDGVDEVVILRGSAND.

The short motif at 99 to 111 is the PRPP-binding element; that stretch reads VVLVDDVLFTGRT.

Belongs to the purine/pyrimidine phosphoribosyltransferase family. PyrR subfamily.

It catalyses the reaction UMP + diphosphate = 5-phospho-alpha-D-ribose 1-diphosphate + uracil. In terms of biological role, regulates the transcription of the pyrimidine nucleotide (pyr) operon in response to exogenous pyrimidines. Its function is as follows. Also displays a weak uracil phosphoribosyltransferase activity which is not physiologically significant. This chain is Bifunctional protein PyrR, found in Chloroflexus aurantiacus (strain ATCC 29366 / DSM 635 / J-10-fl).